A 424-amino-acid polypeptide reads, in one-letter code: Serine hydroxymethyltransferase 2 (424 aa).

(6S)-5,6,7,8-tetrahydrofolate-binding positions include leucine 125 and 129–131 (GHL). Residue lysine 234 is modified to N6-(pyridoxal phosphate)lysine. (6S)-5,6,7,8-tetrahydrofolate is bound at residue glutamate 250.

This sequence belongs to the SHMT family. In terms of assembly, homodimer. It depends on pyridoxal 5'-phosphate as a cofactor.

It is found in the cytoplasm. It catalyses the reaction (6R)-5,10-methylene-5,6,7,8-tetrahydrofolate + glycine + H2O = (6S)-5,6,7,8-tetrahydrofolate + L-serine. The protein operates within one-carbon metabolism; tetrahydrofolate interconversion. Its pathway is amino-acid biosynthesis; glycine biosynthesis; glycine from L-serine: step 1/1. Catalyzes the reversible interconversion of serine and glycine with tetrahydrofolate (THF) serving as the one-carbon carrier. This reaction serves as the major source of one-carbon groups required for the biosynthesis of purines, thymidylate, methionine, and other important biomolecules. Also exhibits THF-independent aldolase activity toward beta-hydroxyamino acids, producing glycine and aldehydes, via a retro-aldol mechanism. This Ralstonia nicotianae (strain ATCC BAA-1114 / GMI1000) (Ralstonia solanacearum) protein is Serine hydroxymethyltransferase 2.